Here is a 397-residue protein sequence, read N- to C-terminus: MAKEKFERTKPHVNIGTIGHVDHGKTTLTAAITTILAKEGKAKAFNYEEIDKAPEEKERGITINTAHVEYETENRHYAHVDCPGHADYVKNMITGAAQMDGAILVVSAADGPMPQTREHILLASRVGVEYIVVFLNKADQVDDPELIDLVEMEVRELLNEYGFPGDDTPIVVGSALKALQNPDDAEAIKPIKDLMAEVDAYIPTPERPTDKAFLMPIEDVFTITGRGTVATGRVETGTLKVGDEVEIVGMKDEITKVVVTGVEMFRKILDSALAGDNIGALLRGVQREDIERGQVLAKPGSITPHNKFVGQVYVLKKEEGGRHTPFFNGYRPQFYFRTTDVTGSIQLPDGVEMVMPGDHIDMTVELITKVAMGDNLRFAIREGGRTVGSGVVTSIIE.

The 197-residue stretch at 10-206 (KPHVNIGTIG…EVDAYIPTPE (197 aa)) folds into the tr-type G domain. Positions 19 to 26 (GHVDHGKT) are G1. GTP is bound at residue 19-26 (GHVDHGKT). Residue threonine 26 coordinates Mg(2+). Residues 60–64 (GITIN) form a G2 region. The segment at 81–84 (DCPG) is G3. Residues 81–85 (DCPGH) and 136–139 (NKAD) contribute to the GTP site. A G4 region spans residues 136-139 (NKAD). The segment at 174–176 (SAL) is G5.

It belongs to the TRAFAC class translation factor GTPase superfamily. Classic translation factor GTPase family. EF-Tu/EF-1A subfamily. In terms of assembly, monomer.

It localises to the cytoplasm. It carries out the reaction GTP + H2O = GDP + phosphate + H(+). Functionally, GTP hydrolase that promotes the GTP-dependent binding of aminoacyl-tRNA to the A-site of ribosomes during protein biosynthesis. This Clostridium acetobutylicum (strain ATCC 824 / DSM 792 / JCM 1419 / IAM 19013 / LMG 5710 / NBRC 13948 / NRRL B-527 / VKM B-1787 / 2291 / W) protein is Elongation factor Tu.